Reading from the N-terminus, the 189-residue chain is Large ribosomal subunit protein bL9 (189 aa).

This sequence belongs to the bacterial ribosomal protein bL9 family.

Its function is as follows. Binds to the 23S rRNA. This is Large ribosomal subunit protein bL9 from Brucella melitensis biotype 2 (strain ATCC 23457).